Consider the following 251-residue polypeptide: Hydroxyacylglutathione hydrolase (251 aa).

Residues histidine 58, histidine 60, aspartate 62, histidine 63, histidine 116, aspartate 135, and histidine 173 each coordinate Zn(2+).

It belongs to the metallo-beta-lactamase superfamily. Glyoxalase II family. Monomer. Zn(2+) is required as a cofactor.

The enzyme catalyses an S-(2-hydroxyacyl)glutathione + H2O = a 2-hydroxy carboxylate + glutathione + H(+). Its pathway is secondary metabolite metabolism; methylglyoxal degradation; (R)-lactate from methylglyoxal: step 2/2. In terms of biological role, thiolesterase that catalyzes the hydrolysis of S-D-lactoyl-glutathione to form glutathione and D-lactic acid. The sequence is that of Hydroxyacylglutathione hydrolase from Bdellovibrio bacteriovorus (strain ATCC 15356 / DSM 50701 / NCIMB 9529 / HD100).